The sequence spans 120 residues: uncharacterized protein (120 aa).

Residues 45-78 (QLISESLKIAQKDLMEVRKELRKRKIAIRETERD) adopt a coiled-coil conformation.

This is an uncharacterized protein from Bacillus subtilis (strain 168).